Consider the following 592-residue polypeptide: Aspartate--tRNA(Asp/Asn) ligase (592 aa).

Glu172 is a binding site for L-aspartate. Positions 196 to 199 are aspartate; that stretch reads QLFK. Arg218 lines the L-aspartate pocket. ATP contacts are provided by residues 218–220 and Gln227; that span reads RDE. His450 is an L-aspartate binding site. Glu484 contacts ATP. Residue Arg491 participates in L-aspartate binding. Residue 536 to 539 participates in ATP binding; the sequence is GLDR.

This sequence belongs to the class-II aminoacyl-tRNA synthetase family. Type 1 subfamily. As to quaternary structure, homodimer.

It localises to the cytoplasm. The enzyme catalyses tRNA(Asx) + L-aspartate + ATP = L-aspartyl-tRNA(Asx) + AMP + diphosphate. Its function is as follows. Aspartyl-tRNA synthetase with relaxed tRNA specificity since it is able to aspartylate not only its cognate tRNA(Asp) but also tRNA(Asn). Reaction proceeds in two steps: L-aspartate is first activated by ATP to form Asp-AMP and then transferred to the acceptor end of tRNA(Asp/Asn). The sequence is that of Aspartate--tRNA(Asp/Asn) ligase from Thioalkalivibrio sulfidiphilus (strain HL-EbGR7).